A 237-amino-acid chain; its full sequence is MQENRPVIALDFPEFSDVKDFLEKFDPSEQLYIKLGMELFYTAGPQVVYYVKSLGHSVFLDLKLHDIPNTVESSMHVLARLGVDMVNVHAAGGVEMMVAAKRGLEAGTPVGRQRPKLIAVTQLTSTSEEIMQNDQKIMTSLEESVINYAQKTAQAGLDGVVCSAHEVEKIKAATSKEFICLTPGIRPEGASKGDQKRVMTPKEARTIGSDYIVVGRPITQAKDPVASYHAIKAEWNR.

Substrate contacts are provided by residues D11, K34, 61-70, T124, R186, Q195, G215, and R216; that span reads DLKLHDIPNT. K63 acts as the Proton donor in catalysis.

This sequence belongs to the OMP decarboxylase family. Type 1 subfamily. Homodimer.

It catalyses the reaction orotidine 5'-phosphate + H(+) = UMP + CO2. It functions in the pathway pyrimidine metabolism; UMP biosynthesis via de novo pathway; UMP from orotate: step 2/2. Its function is as follows. Catalyzes the decarboxylation of orotidine 5'-monophosphate (OMP) to uridine 5'-monophosphate (UMP). The protein is Orotidine 5'-phosphate decarboxylase of Lactococcus lactis subsp. lactis (strain IL1403) (Streptococcus lactis).